The primary structure comprises 246 residues: 4-hydroxy-tetrahydrodipicolinate reductase (246 aa).

An NAD(+)-binding site is contributed by 9–14 (GNTGRM). Residue Arg36 participates in NADP(+) binding. NAD(+)-binding positions include 78–80 (GTT) and 104–107 (SPNM). The Proton donor/acceptor role is filled by His137. (S)-2,3,4,5-tetrahydrodipicolinate is bound at residue His138. Catalysis depends on Lys141, which acts as the Proton donor. Residue 147–148 (GT) coordinates (S)-2,3,4,5-tetrahydrodipicolinate.

This sequence belongs to the DapB family.

It localises to the cytoplasm. The enzyme catalyses (S)-2,3,4,5-tetrahydrodipicolinate + NAD(+) + H2O = (2S,4S)-4-hydroxy-2,3,4,5-tetrahydrodipicolinate + NADH + H(+). It carries out the reaction (S)-2,3,4,5-tetrahydrodipicolinate + NADP(+) + H2O = (2S,4S)-4-hydroxy-2,3,4,5-tetrahydrodipicolinate + NADPH + H(+). The protein operates within amino-acid biosynthesis; L-lysine biosynthesis via DAP pathway; (S)-tetrahydrodipicolinate from L-aspartate: step 4/4. In terms of biological role, catalyzes the conversion of 4-hydroxy-tetrahydrodipicolinate (HTPA) to tetrahydrodipicolinate. This Chlamydia muridarum (strain MoPn / Nigg) protein is 4-hydroxy-tetrahydrodipicolinate reductase.